Reading from the N-terminus, the 185-residue chain is Transmembrane protein 140 (185 aa).

Residues 1–11 are Cytoplasmic-facing; it reads MAGPRPRWRDQ. The chain crosses the membrane as a helical span at residues 12–32; it reads LLFMSIIVLVIVVICLMFYAL. At 33–77 the chain is on the extracellular side; sequence LWEAGNLTDLPNLRIGFYNFCLWNEDTSTLQCHQFPELEALGVPR. Asn38 is a glycosylation site (N-linked (GlcNAc...) asparagine). Residues 78–98 form a helical membrane-spanning segment; sequence VGLGLARLGVYGSLVLTLFAP. Residues 99–114 are Cytoplasmic-facing; it reads QPLLLAQCNSDERAWR. A helical membrane pass occupies residues 115–135; it reads LAVGFLAVSSVLLAGGLGLFL. Residues 136 to 150 lie on the Extracellular side of the membrane; sequence SYVWKWVRLSLPGPG. Residues 151-171 form a helical membrane-spanning segment; it reads FLALGSAQALLILLLIAMAVF. Over 172–185 the chain is Cytoplasmic; sequence PLRAERAESKLESC.

Expression significantly higher in gliomas than in normal brain tissues.

Its subcellular location is the membrane. This chain is Transmembrane protein 140 (TMEM140), found in Homo sapiens (Human).